The sequence spans 336 residues: tRNA(Ile)-lysidine synthase (336 aa).

Residue 32 to 37 (SGGQDS) participates in ATP binding.

This sequence belongs to the tRNA(Ile)-lysidine synthase family.

The protein resides in the cytoplasm. The enzyme catalyses cytidine(34) in tRNA(Ile2) + L-lysine + ATP = lysidine(34) in tRNA(Ile2) + AMP + diphosphate + H(+). Its function is as follows. Ligates lysine onto the cytidine present at position 34 of the AUA codon-specific tRNA(Ile) that contains the anticodon CAU, in an ATP-dependent manner. Cytidine is converted to lysidine, thus changing the amino acid specificity of the tRNA from methionine to isoleucine. The protein is tRNA(Ile)-lysidine synthase of Synechococcus sp. (strain JA-3-3Ab) (Cyanobacteria bacterium Yellowstone A-Prime).